We begin with the raw amino-acid sequence, 427 residues long: Peptidase B (427 aa).

Residues K195 and D200 each contribute to the Mn(2+) site. The active site involves K207. The Mn(2+) site is built by D218, D277, and E279. Residue R281 is part of the active site.

It belongs to the peptidase M17 family. As to quaternary structure, homohexamer. Requires Mn(2+) as cofactor.

Its subcellular location is the cytoplasm. It catalyses the reaction Release of an N-terminal amino acid, Xaa, from a peptide or arylamide. Xaa is preferably Glu or Asp but may be other amino acids, including Leu, Met, His, Cys and Gln.. In terms of biological role, probably plays an important role in intracellular peptide degradation. The polypeptide is Peptidase B (Escherichia coli (strain ATCC 8739 / DSM 1576 / NBRC 3972 / NCIMB 8545 / WDCM 00012 / Crooks)).